A 647-amino-acid polypeptide reads, in one-letter code: Acetyl-coenzyme A synthetase (647 aa).

CoA contacts are provided by residues 189–192, Thr307, and Asn331; that span reads RGGK. ATP contacts are provided by residues 383-385, 407-412, Asp496, and Arg511; these read GEP and DTWWQT. Residue Ser519 participates in CoA binding. ATP is bound at residue Arg522. Mg(2+) contacts are provided by His535 and Val538. Residue Arg580 coordinates CoA. N6-acetyllysine is present on Lys605.

This sequence belongs to the ATP-dependent AMP-binding enzyme family. Mg(2+) serves as cofactor. Acetylated. Deacetylation by the SIR2-homolog deacetylase activates the enzyme.

It carries out the reaction acetate + ATP + CoA = acetyl-CoA + AMP + diphosphate. In terms of biological role, catalyzes the conversion of acetate into acetyl-CoA (AcCoA), an essential intermediate at the junction of anabolic and catabolic pathways. AcsA undergoes a two-step reaction. In the first half reaction, AcsA combines acetate with ATP to form acetyl-adenylate (AcAMP) intermediate. In the second half reaction, it can then transfer the acetyl group from AcAMP to the sulfhydryl group of CoA, forming the product AcCoA. This Syntrophus aciditrophicus (strain SB) protein is Acetyl-coenzyme A synthetase.